A 122-amino-acid chain; its full sequence is Large ribosomal subunit protein bL12 (122 aa).

The protein belongs to the bacterial ribosomal protein bL12 family. Homodimer. Part of the ribosomal stalk of the 50S ribosomal subunit. Forms a multimeric L10(L12)X complex, where L10 forms an elongated spine to which 2 to 4 L12 dimers bind in a sequential fashion. Binds GTP-bound translation factors.

Functionally, forms part of the ribosomal stalk which helps the ribosome interact with GTP-bound translation factors. Is thus essential for accurate translation. The protein is Large ribosomal subunit protein bL12 of Flavobacterium psychrophilum (strain ATCC 49511 / DSM 21280 / CIP 103535 / JIP02/86).